A 302-amino-acid polypeptide reads, in one-letter code: MVRKAGLIVNDGKELAVQTAISVQKKLEKSNYEVVRVSSSGGMVGFANPDQHVRPLGYSNCVPEGFDSSMEFAIVLGGDGTVLSAARQTAPAKIPILTINTGHLGFLAEAYLSNLEEAIDKLIIGKWDIEERKSLIISVMRNEQRRWESLCLNEMALHREPLTSMCHFEISIGRHAPVDISADGVILSTPTGSTAYSLSAGGPVITPDCPVVQLTPIAPHSLASRALVFNDSEPVTVFPATPERLVMVVDGNAGCYVWPEDRVLIRKSKHSVKFIRLEDHEFFQVLRNKLGWGLPHVGKPNK.

Catalysis depends on Asp-79, which acts as the Proton acceptor. NAD(+) contacts are provided by residues 79-80 (DG), 153-154 (NE), Asp-183, 194-199 (TAYSLS), Ala-218, and Asn-252.

This sequence belongs to the NAD kinase family. A divalent metal cation is required as a cofactor.

The protein resides in the cytoplasm. The enzyme catalyses NAD(+) + ATP = ADP + NADP(+) + H(+). Functionally, involved in the regulation of the intracellular balance of NAD and NADP, and is a key enzyme in the biosynthesis of NADP. Catalyzes specifically the phosphorylation on 2'-hydroxyl of the adenosine moiety of NAD to yield NADP. This Prochlorococcus marinus subsp. pastoris (strain CCMP1986 / NIES-2087 / MED4) protein is NAD kinase 2.